Here is a 150-residue protein sequence, read N- to C-terminus: Transcriptional repressor NrdR (150 aa).

A zinc finger lies at 3–34 (CPFCGQLDSKVVDSRPDKGGAAIRRRRECESC). The 91-residue stretch at 49-139 (PLVLKKDGRR…VYRSFKDVNE (91 aa)) folds into the ATP-cone domain.

This sequence belongs to the NrdR family. It depends on Zn(2+) as a cofactor.

Its function is as follows. Negatively regulates transcription of bacterial ribonucleotide reductase nrd genes and operons by binding to NrdR-boxes. This is Transcriptional repressor NrdR from Geobacter sulfurreducens (strain ATCC 51573 / DSM 12127 / PCA).